A 387-amino-acid chain; its full sequence is 3-ketoacyl-CoA thiolase (387 aa).

Catalysis depends on Cys91, which acts as the Acyl-thioester intermediate. Active-site proton acceptor residues include His343 and Cys373.

It belongs to the thiolase-like superfamily. Thiolase family. As to quaternary structure, heterotetramer of two alpha chains (FadB) and two beta chains (FadA).

It is found in the cytoplasm. The catalysed reaction is an acyl-CoA + acetyl-CoA = a 3-oxoacyl-CoA + CoA. The protein operates within lipid metabolism; fatty acid beta-oxidation. Functionally, catalyzes the final step of fatty acid oxidation in which acetyl-CoA is released and the CoA ester of a fatty acid two carbons shorter is formed. The protein is 3-ketoacyl-CoA thiolase of Escherichia coli (strain UTI89 / UPEC).